An 85-amino-acid chain; its full sequence is Conotoxin Lt28.7 (85 aa).

Residues 1 to 21 form the signal peptide; sequence MPKLEMMLLVLLILPLCYIDA. The propeptide occupies 22-40; it reads VGPPPPWNMEDEIIEHWQE.

It belongs to the conotoxin D superfamily. In terms of processing, contains 5 disulfide bonds. Expressed by the venom duct.

It localises to the secreted. Functionally, probable neurotoxin. In Conus litteratus (Lettered cone), this protein is Conotoxin Lt28.7.